The chain runs to 451 residues: Probable D-serine dehydratase (451 aa).

Lysine 119 is subject to N6-(pyridoxal phosphate)lysine.

This sequence belongs to the serine/threonine dehydratase family. DsdA subfamily. The cofactor is pyridoxal 5'-phosphate.

It catalyses the reaction D-serine = pyruvate + NH4(+). This is Probable D-serine dehydratase from Acidovorax ebreus (strain TPSY) (Diaphorobacter sp. (strain TPSY)).